Consider the following 446-residue polypeptide: MTEQKRKLEKLTGVKGMNDILPQDAGLWEFFEATVKSLLRAYGYQNIRTPIVEHTQLFTRGIGEVTDIVEKEMYSFVDALNGENLTLRPENTAAVVRAAIEHNMLYDGPKRLWYLGPMFRHERPQRGRYRQFHQVGVEALGFAGPDADAEIIMMCQRLWDDLGLTGIKLEINSLGLAEERAAHRVELIKYLEQHVDKLDDDAQRRLYTNPLRVLDTKNPALQEIVRNAPQLIDFLGDVSRAHFDGLQQLLKANNLPFTINPRLVRGLDYYNLTVFEWVTDKLGAQGTVAAGGRYDPLIEQLGGKPTAACGWAMGVERILELLKEEHLVPEQEGVDVYVVHQGDAAREQAFIVAERLRDTGLDVILHCSADGAGASFKSQMKRADASGAAFAVIFGEDEVANGTVSVKPLRGTGAEGEKNVQQSVPVESLTEFLINAMVATAEDGDD.

The protein belongs to the class-II aminoacyl-tRNA synthetase family. As to quaternary structure, homodimer.

Its subcellular location is the cytoplasm. The catalysed reaction is tRNA(His) + L-histidine + ATP = L-histidyl-tRNA(His) + AMP + diphosphate + H(+). This Burkholderia pseudomallei (strain 1710b) protein is Histidine--tRNA ligase.